We begin with the raw amino-acid sequence, 469 residues long: Glutamate--tRNA ligase (469 aa).

The 'HIGH' region motif lies at P8–G18. Zn(2+) contacts are provided by C97, C99, C124, and D126. Positions K236 to R240 match the 'KMSKS' region motif. K239 provides a ligand contact to ATP.

This sequence belongs to the class-I aminoacyl-tRNA synthetase family. Glutamate--tRNA ligase type 1 subfamily. Monomer. It depends on Zn(2+) as a cofactor.

The protein localises to the cytoplasm. The catalysed reaction is tRNA(Glu) + L-glutamate + ATP = L-glutamyl-tRNA(Glu) + AMP + diphosphate. Its function is as follows. Catalyzes the attachment of glutamate to tRNA(Glu) in a two-step reaction: glutamate is first activated by ATP to form Glu-AMP and then transferred to the acceptor end of tRNA(Glu). This Francisella philomiragia subsp. philomiragia (strain ATCC 25017 / CCUG 19701 / FSC 153 / O#319-036) protein is Glutamate--tRNA ligase.